The chain runs to 424 residues: Tyrosine--tRNA ligase (424 aa).

Tyrosine 36 contributes to the L-tyrosine binding site. The 'HIGH' region motif lies at 41-50; sequence PTAPSLHAGH. 2 residues coordinate L-tyrosine: tyrosine 171 and glutamine 175. The 'KMSKS' region motif lies at 231–235; the sequence is KFGKS. Lysine 234 is a binding site for ATP. The region spanning 356–413 is the S4 RNA-binding domain; the sequence is DGIVDLLVASGLSASKGAARRTIHEGGVSVNNIRVDNEEWVPQSSDFLHGRWLVLRRG.

The protein belongs to the class-I aminoacyl-tRNA synthetase family. TyrS type 1 subfamily. As to quaternary structure, homodimer.

The protein resides in the cytoplasm. The enzyme catalyses tRNA(Tyr) + L-tyrosine + ATP = L-tyrosyl-tRNA(Tyr) + AMP + diphosphate + H(+). Functionally, catalyzes the attachment of tyrosine to tRNA(Tyr) in a two-step reaction: tyrosine is first activated by ATP to form Tyr-AMP and then transferred to the acceptor end of tRNA(Tyr). This Mycobacterium bovis (strain ATCC BAA-935 / AF2122/97) protein is Tyrosine--tRNA ligase.